We begin with the raw amino-acid sequence, 58 residues long: Parvalbumin beta 3 (58 aa).

Ala1 is modified (N-acetylalanine). Residues 24–58 (FNYKTFFKFFAIIDQDHSGFIEEEELKALSDAETK) enclose the EF-hand domain. Residues Asp37, Asp39, Ser41, Phe43, Glu45, and Glu48 each coordinate Ca(2+).

The protein belongs to the parvalbumin family.

Its function is as follows. In muscle, parvalbumin is thought to be involved in relaxation after contraction. It binds two calcium ions. In Merluccius senegalensis (Senegalese hake), this protein is Parvalbumin beta 3.